The chain runs to 323 residues: Viral cathepsin (323 aa).

The N-terminal stretch at 1–16 (MNKILFYLFVYGVVNS) is a signal peptide. A propeptide spans 17–112 (AAYDLLKAPN…IVLDQPPGKG (96 aa)) (activation peptide). Disulfide bonds link C133-C174, C167-C207, and C262-C310. Residue C136 is part of the active site. N158 carries N-linked (GlcNAc...) asparagine; by host glycosylation. Active-site residues include H269 and N289.

It belongs to the peptidase C1 family. In terms of processing, synthesized as an inactive proenzyme and activated by proteolytic removal of the inhibitory propeptide.

It carries out the reaction Endopeptidase of broad specificity, hydrolyzing substrates of both cathepsin L and cathepsin B.. Functionally, cysteine protease that plays an essential role in host liquefaction to facilitate horizontal transmission of the virus. May participate in the degradation of foreign protein expressed by the baculovirus system. The protein is Viral cathepsin (VCATH) of Helicoverpa zea (Corn earworm moth).